A 233-amino-acid polypeptide reads, in one-letter code: Large ribosomal subunit protein uL1 (233 aa).

This sequence belongs to the universal ribosomal protein uL1 family. As to quaternary structure, part of the 50S ribosomal subunit.

Functionally, binds directly to 23S rRNA. The L1 stalk is quite mobile in the ribosome, and is involved in E site tRNA release. In terms of biological role, protein L1 is also a translational repressor protein, it controls the translation of the L11 operon by binding to its mRNA. The protein is Large ribosomal subunit protein uL1 of Thermotoga maritima (strain ATCC 43589 / DSM 3109 / JCM 10099 / NBRC 100826 / MSB8).